The primary structure comprises 84 residues: UPF0512 protein O (84 aa).

The protein belongs to the UPF0512 family.

The sequence is that of UPF0512 protein O from Dictyostelium discoideum (Social amoeba).